Reading from the N-terminus, the 308-residue chain is HTH-type transcriptional activator AllS (308 aa).

In terms of domain architecture, HTH lysR-type spans 2–59 (FDPETLRTFIAVAETGSFSKAAERLCKTTATISYRIKLLEENTGVALFFRTTRSVTLT). Positions 19-38 (FSKAAERLCKTTATISYRIK) form a DNA-binding region, H-T-H motif.

This sequence belongs to the LysR transcriptional regulatory family.

Positive regulator essential for the expression of allD operon. Binds to the allD promoter. The protein is HTH-type transcriptional activator AllS (allS) of Escherichia coli O6:K15:H31 (strain 536 / UPEC).